Here is a 304-residue protein sequence, read N- to C-terminus: Ribosomal RNA small subunit methyltransferase H (304 aa).

S-adenosyl-L-methionine is bound by residues 47 to 49, aspartate 66, phenylalanine 93, aspartate 108, and glutamine 115; that span reads GGH.

The protein belongs to the methyltransferase superfamily. RsmH family.

It localises to the cytoplasm. It catalyses the reaction cytidine(1402) in 16S rRNA + S-adenosyl-L-methionine = N(4)-methylcytidine(1402) in 16S rRNA + S-adenosyl-L-homocysteine + H(+). In terms of biological role, specifically methylates the N4 position of cytidine in position 1402 (C1402) of 16S rRNA. The protein is Ribosomal RNA small subunit methyltransferase H of Prochlorococcus marinus (strain NATL1A).